Reading from the N-terminus, the 285-residue chain is Casein kinase II subunit beta-2 (285 aa).

The tract at residues 226–285 is disordered; sequence FKDAEDEAELDDDDEEEEEEEEEEEELAAMDEAEGAQQQHAAAAAGTATGGVAAGGEGVH. Residues 229-259 show a composition bias toward acidic residues; that stretch reads AEDEAELDDDDEEEEEEEEEEEELAAMDEAE. Residues 260–272 show a composition bias toward low complexity; that stretch reads GAQQQHAAAAAGT. The span at 273–285 shows a compositional bias: gly residues; the sequence is ATGGVAAGGEGVH.

This sequence belongs to the casein kinase 2 subunit beta family. Tetramer composed of two alpha chains, one beta chain and one beta' chain. Post-translationally, phosphorylated by alpha subunit.

Functionally, regulatory subunit of casein kinase II/CK2. As part of the kinase complex regulates the basal catalytic activity of the alpha subunit a constitutively active serine/threonine-protein kinase that phosphorylates a large number of substrates containing acidic residues C-terminal to the phosphorylated serine or threonine. The sequence is that of Casein kinase II subunit beta-2 (ckb-2) from Neurospora crassa (strain ATCC 24698 / 74-OR23-1A / CBS 708.71 / DSM 1257 / FGSC 987).